A 169-amino-acid chain; its full sequence is uncharacterized protein (169 aa).

The first 21 residues, 1-21 (MVPVARASLFTLACLLVSVCA), serve as a signal peptide directing secretion.

As to expression, component of the acid-soluble and acid-insoluble organic matrix of calcified shell layers (at protein level).

Its subcellular location is the secreted. This is an uncharacterized protein from Haliotis asinina (Donkey's ear abalone).